We begin with the raw amino-acid sequence, 127 residues long: MKDPSRSSTSPSIINEDVIINGHSHEDDNPFAEYMWMENEEEFNRQIEEELWEEEFIERCFQEMLEEEEEHEWFIPARDLPQTMDQIQDQFNDLVISDGSSLEDLVVKSNLNPNAKEFVPGVKYGNI.

Positions 1–13 (MKDPSRSSTSPSI) are enriched in polar residues. The segment at 1 to 24 (MKDPSRSSTSPSIINEDVIINGHS) is disordered. The tract at residues 22–75 (GHSHEDDNPFAEYMWMENEEEFNRQIEEELWEEEFIERCFQEMLEEEEEHEWFI) is PABPC1-interacting motif-1 (PAM1). The tract at residues 105–120 (LVVKSNLNPNAKEFVP) is PABPC1-interacting motif-2 (PAM2).

This sequence belongs to the PAIP2 family. Interacts with the second and third RRM domains and C-terminus regions of PABPC1 in a 2:1 stoichiometry. In terms of processing, ubiquitinated, leading to its degradation by the proteasome. In terms of tissue distribution, expressed at highest level in testis, but also abundant in brain, cervix, lung, ovary, placenta, adipose tissue, thymus and thyroid.

It is found in the cytoplasm. Its function is as follows. Acts as a repressor in the regulation of translation initiation of poly(A)-containing mRNAs. Its inhibitory activity on translation is mediated via its action on PABPC1. Displaces the interaction of PABPC1 with poly(A) RNA and competes with PAIP1 for binding to PABPC1. Its association with PABPC1 results in disruption of the cytoplasmic poly(A) RNP structure organization. The sequence is that of Polyadenylate-binding protein-interacting protein 2 (PAIP2) from Homo sapiens (Human).